The primary structure comprises 228 residues: Translation initiation factor 6 (228 aa).

It belongs to the eIF-6 family.

Binds to the 50S ribosomal subunit and prevents its association with the 30S ribosomal subunit to form the 70S initiation complex. In Thermococcus onnurineus (strain NA1), this protein is Translation initiation factor 6.